The chain runs to 239 residues: Fatty acid metabolism regulator protein (239 aa).

The region spanning 6 to 74 (QSPAGFAEEY…HGKPTKINNF (69 aa)) is the HTH gntR-type domain. A DNA-binding region (H-T-H motif) is located at residues 34-53 (ERELSELIGVTRTTLREVLQ).

In terms of assembly, homodimer.

Its subcellular location is the cytoplasm. In terms of biological role, multifunctional regulator of fatty acid metabolism. This is Fatty acid metabolism regulator protein from Pectobacterium atrosepticum (strain SCRI 1043 / ATCC BAA-672) (Erwinia carotovora subsp. atroseptica).